The following is a 115-amino-acid chain: UPF0235 protein CTA_0423 (115 aa).

Belongs to the UPF0235 family.

This chain is UPF0235 protein CTA_0423, found in Chlamydia trachomatis serovar A (strain ATCC VR-571B / DSM 19440 / HAR-13).